A 361-amino-acid polypeptide reads, in one-letter code: Phosphoribosylformylglycinamidine cyclo-ligase (361 aa).

This sequence belongs to the AIR synthase family.

The protein localises to the cytoplasm. The catalysed reaction is 2-formamido-N(1)-(5-O-phospho-beta-D-ribosyl)acetamidine + ATP = 5-amino-1-(5-phospho-beta-D-ribosyl)imidazole + ADP + phosphate + H(+). Its pathway is purine metabolism; IMP biosynthesis via de novo pathway; 5-amino-1-(5-phospho-D-ribosyl)imidazole from N(2)-formyl-N(1)-(5-phospho-D-ribosyl)glycinamide: step 2/2. In Bartonella henselae (strain ATCC 49882 / DSM 28221 / CCUG 30454 / Houston 1) (Rochalimaea henselae), this protein is Phosphoribosylformylglycinamidine cyclo-ligase.